A 426-amino-acid chain; its full sequence is 3-phosphoshikimate 1-carboxyvinyltransferase (426 aa).

Positions 20, 21, and 25 each coordinate 3-phosphoshikimate. Lys20 lines the phosphoenolpyruvate pocket. Gly92 and Arg120 together coordinate phosphoenolpyruvate. Residues Ser166, Gln168, Asp312, and Lys339 each coordinate 3-phosphoshikimate. Gln168 provides a ligand contact to phosphoenolpyruvate. Asp312 (proton acceptor) is an active-site residue. 2 residues coordinate phosphoenolpyruvate: Arg343 and Arg385.

It belongs to the EPSP synthase family. Monomer.

It localises to the cytoplasm. It catalyses the reaction 3-phosphoshikimate + phosphoenolpyruvate = 5-O-(1-carboxyvinyl)-3-phosphoshikimate + phosphate. The protein operates within metabolic intermediate biosynthesis; chorismate biosynthesis; chorismate from D-erythrose 4-phosphate and phosphoenolpyruvate: step 6/7. Functionally, catalyzes the transfer of the enolpyruvyl moiety of phosphoenolpyruvate (PEP) to the 5-hydroxyl of shikimate-3-phosphate (S3P) to produce enolpyruvyl shikimate-3-phosphate and inorganic phosphate. This chain is 3-phosphoshikimate 1-carboxyvinyltransferase, found in Enterococcus faecalis (strain ATCC 700802 / V583).